The following is a 33-amino-acid chain: Toxin Bcg III 25.52 (33 aa).

A disulfide bond links Cys6 and Cys28.

It is found in the secreted. It localises to the nematocyst. In Bunodosoma cangicum (Sea anemone), this protein is Toxin Bcg III 25.52.